A 792-amino-acid polypeptide reads, in one-letter code: MHVIKRDGRQERVMFDKITSRIQKLCYGLNMDFVDPAQITMKVIQGLYSGVTTVELDTLAAETAATLTTKHPDYAILAARIAVSNLHKETKKVFSDVMEDLYNYINPHNGKHSPMVAKSTLDIVLANKDRLNSAIIYDRDFSYNYFGFKTLERSYLLKINGKVAERPQHMLMRVSVGIHKEDIDAAIETYNLLSERWFTHASPTLFNAGTNRPQLSSCFLLSMKDDSIEGIYDTLKQCALISKSAGGIGVAVSCIRATGSYIAGTNGNSNGLVPMLRVYNNTARYVDQGGNKRPGAFAIYLEPWHLDIFEFLDLKKNTGKEEQRARDLFFALWIPDLFMKRVETNQDWSLMCPNECPGLDEVWGEEFEKLYASYEKQGRVRKVVKAQQLWYAIIESQTETGTPYMLYKDSCNRKSNQQNLGTIKCSNLCTEIVEYTSKDEVAVCNLASLALNMYVTSEHTYDFKKLAEVTKVVVRNLNKIIDINYYPVPEACLSNKRHRPIGIGVQGLADAFILMRYPFESAEAQLLNKQIFETIYYGALEASCDLAKEQGPYETYEGSPVSKGILQYDMWNVTPTDLWDWKVLKEKIAKYGIRNSLLIAPMPTASTAQILGNNESIEPYTSNIYTRRVLSGEFQIVNPHLLKDLTERGLWHEEMKNQIIACNGSIQSIPEIPDDLKQLYKTVWEISQKTVLKMAAERGAFIDQSQSLNIHIAEPNYGKLTSMHFYGWKQGLKTGMYYLRTRPAANPIQFTLNKEKLKDKEKVSKEEEEKERNTAAMVCSLENRDECLMCGS.

In terms of domain architecture, ATP-cone spans Met1–Lys92. ATP contacts are provided by residues Lys5 to Arg6, Glu11 to Lys17, Thr53, and Asp57. Lys17 carries the N6-acetyllysine modification. GDP-binding residues include Ser202 and Ser217. An intrachain disulfide couples Cys218 to Cys444. Residues Asp226–Ile228, Lys243, Arg256, and Ala263–Gly264 each bind dTTP. N6-acetyllysine is present on Lys376. A GDP-binding site is contributed by Asn427. The active-site Proton acceptor is Asn427. Cys429 serves as the catalytic Cysteine radical intermediate. GDP-binding positions include Glu431 and Thr604–Thr607. Glu431 (proton acceptor) is an active-site residue. Phosphothreonine is present on Thr751.

This sequence belongs to the ribonucleoside diphosphate reductase large chain family. As to quaternary structure, heterodimer of a large and a small subunit. Heterodimer with small subunit RRM2 or RRM2B. The heterodimer with RRM2 has higher catalytic activity than the heterodimer with RRM2B. Interacts with AHCYL1 which inhibits its activity.

The protein localises to the cytoplasm. The enzyme catalyses a 2'-deoxyribonucleoside 5'-diphosphate + [thioredoxin]-disulfide + H2O = a ribonucleoside 5'-diphosphate + [thioredoxin]-dithiol. Under complex allosteric control mediated by deoxynucleoside triphosphates and ATP binding to separate specificity and activation sites on the M1 subunit. The type of nucleotide bound at the specificity site determines substrate preference. It seems probable that ATP makes the enzyme reduce CDP and UDP, dGTP favors ADP reduction and dTTP favors GDP reduction. Stimulated by ATP and inhibited by dATP binding to the activity site, the dATP inhibition is mediated by AHCYL1 which stabilizes dATP in the site. In terms of biological role, provides the precursors necessary for DNA synthesis. Catalyzes the biosynthesis of deoxyribonucleotides from the corresponding ribonucleotides. This chain is Ribonucleoside-diphosphate reductase large subunit (RRM1), found in Homo sapiens (Human).